The following is a 149-amino-acid chain: 2S seed storage albumin protein (149 aa).

An N-terminal signal peptide occupies residues 1–22; sequence MKLFIILATATLLIAATQATYP. 4 disulfide bridges follow: Cys-38–Cys-98, Cys-52–Cys-87, Cys-88–Cys-133, and Cys-100–Cys-140. The interval 121-128 is igE-binding; it reads EGVRDLKE.

Belongs to the 2S seed storage albumins family. Expressed in seeds (at protein level).

Its function is as follows. Seed storage protein. This chain is 2S seed storage albumin protein, found in Fagopyrum esculentum (Common buckwheat).